The primary structure comprises 179 residues: Negative modulator of initiation of replication (179 aa).

This sequence belongs to the SeqA family. In terms of assembly, homodimer. Polymerizes to form helical filaments.

The protein resides in the cytoplasm. Negative regulator of replication initiation, which contributes to regulation of DNA replication and ensures that replication initiation occurs exactly once per chromosome per cell cycle. Binds to pairs of hemimethylated GATC sequences in the oriC region, thus preventing assembly of replication proteins and re-initiation at newly replicated origins. Repression is relieved when the region becomes fully methylated. This chain is Negative modulator of initiation of replication, found in Vibrio atlanticus (strain LGP32) (Vibrio splendidus (strain Mel32)).